The chain runs to 222 residues: GTP cyclohydrolase 1 (222 aa).

Residues C111, H114, and C182 each contribute to the Zn(2+) site.

Belongs to the GTP cyclohydrolase I family. In terms of assembly, toroid-shaped homodecamer, composed of two pentamers of five dimers.

It catalyses the reaction GTP + H2O = 7,8-dihydroneopterin 3'-triphosphate + formate + H(+). It participates in cofactor biosynthesis; 7,8-dihydroneopterin triphosphate biosynthesis; 7,8-dihydroneopterin triphosphate from GTP: step 1/1. This Klebsiella pneumoniae subsp. pneumoniae (strain ATCC 700721 / MGH 78578) protein is GTP cyclohydrolase 1.